A 134-amino-acid polypeptide reads, in one-letter code: Rhoptry antigen protein (134 aa).

Disordered stretches follow at residues 21–82 and 96–134; these read MGPL…SNLK and QLDK…ENEL. Positions 29-38 are enriched in polar residues; the sequence is KSTSAASTSD. Low complexity predominate over residues 39 to 54; sequence ELSGSEGPSTESTSTG. Residues 57-69 are compositionally biased toward basic and acidic residues; it reads GEDKTTDNTYKEM. Basic residues predominate over residues 102-113; sequence PKKKKSKRKKKR. Basic and acidic residues predominate over residues 114 to 126; the sequence is DSSSDRILLEESK.

The protein is Rhoptry antigen protein of Plasmodium falciparum.